The chain runs to 2439 residues: Protein roller-3 (2439 aa).

An N-terminal signal peptide occupies residues 1–26 (MLDFPRFSLFLFLLFSSFLFSSFVHA). The Extracellular segment spans residues 27 to 1851 (ATVFSSSLKT…EEEKGGILPY (1825 aa)). Residues Asn-64, Asn-182, Asn-334, Asn-394, Asn-496, Asn-533, Asn-657, Asn-766, Asn-868, Asn-1003, Asn-1036, Asn-1090, and Asn-1261 are each glycosylated (N-linked (GlcNAc...) asparagine). The Fibronectin type-III 1 domain maps to 618–720 (KPRIVAVSSI…STSNTALPDL (103 aa)). Fibronectin type-III domains follow at residues 1403–1503 (SKGI…TGFG), 1507–1628 (APRD…TLDV), 1629–1732 (PGTL…IQQA), and 1738–1843 (VPTA…EKEE). 4 N-linked (GlcNAc...) asparagine glycosylation sites follow: Asn-1567, Asn-1636, Asn-1677, and Asn-1779. A helical transmembrane segment spans residues 1852 to 1872 (FLGISIILLLAAMILVGCFWL). The Cytoplasmic portion of the chain corresponds to 1873–2439 (KSRRRQQMKK…GGTCRSVSQV (567 aa)). A Protein kinase domain is found at 1928–2199 (VEIVRHISDC…ATILKIFETC (272 aa)). Residues 1934 to 1942 (ISDCSYGSV) and Lys-1963 contribute to the ATP site. Disordered stretches follow at residues 2214–2277 (NEGS…RPAT), 2315–2348 (SQRPLSIHSEDTESTDFGGATSSMHSPSSSNRTN), and 2412–2439 (HLRAPTGQPPTRVNRNSSGGTCRSVSQV). Polar residues-rich tracts occupy residues 2216–2233 (GSDNINFNASQDSTSSRE), 2334–2347 (ATSSMHSPSSSNRT), and 2420–2439 (PPTRVNRNSSGGTCRSVSQV).

It is found in the membrane. In terms of biological role, involved in larval development and locomotion. This chain is Protein roller-3, found in Caenorhabditis briggsae.